The following is a 262-amino-acid chain: ELL-associated factor 2 (262 aa).

Positions 17–104 are necessary for interaction with ELL; it reads LKLGESFEKQ…TGECRLEKLS (88 aa). Polar residues predominate over residues 124–144; the sequence is LEQQQQQMWNPPRTSNLVQHS. 2 disordered regions span residues 124 to 154 and 170 to 232; these read LEQQ…SPTS and MDQM…ADTT. Residues Ser146, Ser151, and Ser154 each carry the phosphoserine modification. Low complexity predominate over residues 174–192; sequence SSCDSSSDSRSSSSSSSED. The segment at 177–262 is necessary for transactivation activity; sequence DSSSDSRSSS…LSESDSDSED (86 aa). Residues 248–262 are necessary for interaction with TCEA1 and transactivation activity; sequence RSDLQLSESDSDSED.

This sequence belongs to the EAF family. As to quaternary structure, component of the super elongation complex (SEC), at least composed of EAF1, EAF2, CDK9, MLLT3/AF9, AFF (AFF1 or AFF4), the P-TEFb complex and ELL (ELL, ELL2 or ELL3). Interacts with ELL, ELL2 and TCEA1.

The protein localises to the nucleus speckle. Acts as a transcriptional transactivator of ELL, ELL2 and TCEA1 elongation activities. Potent inducer of apoptosis in prostatic and non-prostatic cell lines. In Rattus norvegicus (Rat), this protein is ELL-associated factor 2 (Eaf2).